The chain runs to 264 residues: Putative ankyrin repeat domain-containing protein 19 (264 aa).

5 ANK repeats span residues 67 to 96, 100 to 129, 133 to 162, 166 to 195, and 199 to 228; these read KDRT…QINI, LNRT…NPNI, YSNT…NIEA, EGNT…NLHA, and FRRT…NIFS.

The chain is Putative ankyrin repeat domain-containing protein 19 (ANKRD19P) from Homo sapiens (Human).